The chain runs to 321 residues: Chloroplastic calcium uniporter protein (321 aa).

A chloroplast-targeting transit peptide spans Met-1–Ser-56. Transmembrane regions (helical) follow at residues Leu-223 to Trp-243 and Val-249 to Phe-269. Residues Trp-247–Phe-255 carry the Selectivity filter motif. Position 251 (Glu-251) interacts with Ca(2+).

This sequence belongs to the MCU (TC 1.A.77) family.

Its subcellular location is the plastid. It is found in the chloroplast membrane. The catalysed reaction is Ca(2+)(in) = Ca(2+)(out). In terms of biological role, chloroplastic membrane calcium uniporter that mediates calcium uptake into chloroplast stroma. Constitutes a pore-forming and calcium-conducting subunit. Chloroplastic calcium homeostasis plays key roles in cellular physiology. Promotes calcium uptake into chloroplast stroma in response to osmotic-stress, fine-tuning cytosolic MAPK3/MAPK6 phosphorylation and affecting stomata opening. This chain is Chloroplastic calcium uniporter protein, found in Arabidopsis thaliana (Mouse-ear cress).